The chain runs to 439 residues: Protein translocase subunit SecY (439 aa).

10 consecutive transmembrane segments (helical) span residues 19–39 (ILFTIFILFVFRLGAHITVPG), 68–88 (YSLFAMGVSPYITASIIVQLL), 116–136 (YITLVLAMAQSIGITAGFQAM), 151–171 (LMIGAILTTGSMVVTWMGEQI), 176–196 (FGSGVSVIIFAGIVSSIPSAV), 216–236 (WLFVIGLVLSAIIIIYVTTFV), 269–289 (VIPVIFAGSITTAPATILQFL), 312–332 (WTGMLFYALLIVLFTFFYSFV), 373–393 (VGALFLGLISIIPIAAQNVWG), and 396–416 (KIVALGGTSLLILIQVAIQAV).

The protein belongs to the SecY/SEC61-alpha family. Component of the Sec protein translocase complex. Heterotrimer consisting of SecY, SecE and SecG subunits. The heterotrimers can form oligomers, although 1 heterotrimer is thought to be able to translocate proteins. Interacts with the ribosome. Interacts with SecDF, and other proteins may be involved. Interacts with SecA.

The protein resides in the cell membrane. In terms of biological role, the central subunit of the protein translocation channel SecYEG. Consists of two halves formed by TMs 1-5 and 6-10. These two domains form a lateral gate at the front which open onto the bilayer between TMs 2 and 7, and are clamped together by SecE at the back. The channel is closed by both a pore ring composed of hydrophobic SecY resides and a short helix (helix 2A) on the extracellular side of the membrane which forms a plug. The plug probably moves laterally to allow the channel to open. The ring and the pore may move independently. This is Protein translocase subunit SecY from Lactococcus lactis subsp. lactis (strain IL1403) (Streptococcus lactis).